A 298-amino-acid polypeptide reads, in one-letter code: Urease accessory protein UreD 3 (298 aa).

Residues 1–30 (MADEAGTRSAGGRPIPAAEPLRPALSRQRS) form a disordered region.

It belongs to the UreD family. UreD, UreF and UreG form a complex that acts as a GTP-hydrolysis-dependent molecular chaperone, activating the urease apoprotein by helping to assemble the nickel containing metallocenter of UreC. The UreE protein probably delivers the nickel.

The protein localises to the cytoplasm. Required for maturation of urease via the functional incorporation of the urease nickel metallocenter. The polypeptide is Urease accessory protein UreD 3 (Methylorubrum extorquens (strain PA1) (Methylobacterium extorquens)).